The sequence spans 471 residues: Alpha-galactosidase (471 aa).

The first 18 residues, 1-18 (MFNLNFFNYTCHCEWCFW), serve as a signal peptide directing secretion. The cysteines at positions 42 and 74 are disulfide-linked. A glycan (N-linked (GlcNAc...) asparagine) is linked at Asn43. Substrate-binding residues include Asp72 and Asp73. N-linked (GlcNAc...) asparagine glycosylation occurs at Asn105. A disulfide bond links Cys121 and Cys151. Lys147 lines the substrate pocket. Asp149 functions as the Nucleophile in the catalytic mechanism. N-linked (GlcNAc...) asparagine glycosylation occurs at Asn175. Arg205 lines the substrate pocket. The active-site Proton donor is Asp209. 2 cysteine pairs are disulfide-bonded: Cys221–Cys237 and Cys223–Cys230. Gln251 provides a ligand contact to substrate. 6 N-linked (GlcNAc...) asparagine glycosylation sites follow: Asn270, Asn370, Asn403, Asn417, Asn422, and Asn454.

Belongs to the glycosyl hydrolase 27 family. Homotetramer.

It localises to the secreted. The catalysed reaction is Hydrolysis of terminal, non-reducing alpha-D-galactose residues in alpha-D-galactosides, including galactose oligosaccharides, galactomannans and galactolipids.. In Saccharomyces paradoxus (Yeast), this protein is Alpha-galactosidase (MEL).